The sequence spans 286 residues: Probable protein VP2 (286 aa).

2 disordered regions span residues 67 to 108 (LPAA…GPED) and 184 to 286 (QAAR…GGGI). A compositionally biased stretch (basic residues) spans 222-241 (GKTRSRRKAGRKAQRKRRRP). A compositionally biased stretch (low complexity) spans 242–265 (SPSSSSSSCSNSESWESNSDSCST).

Post-translationally, phosphorylated at C-terminal serines.

The polypeptide is Probable protein VP2 (Homo sapiens (Human)).